We begin with the raw amino-acid sequence, 102 residues long: uncharacterized protein (102 aa).

Residues 1–13 show a composition bias toward low complexity; that stretch reads PSSSQALSVPSLS. The segment at 1-24 is disordered; that stretch reads PSSSQALSVPSLSSEKKTASPTCV.

This is an uncharacterized protein from Human cytomegalovirus (strain AD169) (HHV-5).